The following is a 946-amino-acid chain: DNA primase (946 aa).

Residues 596–626 (RDTEEDEDGKENKNNVPDNGVFQKTTSSVDT) are disordered. Positions 617–626 (FQKTTSSVDT) are enriched in polar residues. Residues 881-920 (CLNYTHRNPQETVQVFIDLRTEHSYALWASLWSRCFTKKC) form a CHC2-type zinc finger.

It belongs to the herpesviridae DNA primase family. Associates with the helicase and the primase-associated factor to form the helicase-primase factor. Interacts with host SNAPIN.

It localises to the host nucleus. In terms of biological role, essential component of the helicase/primase complex. Unwinds the DNA at the replication forks and generates single-stranded DNA for both leading and lagging strand synthesis. The primase initiates primer synthesis and thereby produces large amount of short RNA primers on the lagging strand that the polymerase elongates using dNTPs. In Homo sapiens (Human), this protein is DNA primase (UL70).